Here is a 473-residue protein sequence, read N- to C-terminus: Photosystem II CP43 reaction center protein (473 aa).

Residues 1-14 (MKTLYSLRRFYHVE) constitute a propeptide that is removed on maturation. At threonine 15 the chain carries N-acetylthreonine. Position 15 is a phosphothreonine (threonine 15). 5 consecutive transmembrane segments (helical) span residues 69 to 93 (LFEV…PHLA), 134 to 155 (LLGP…KDRN), 178 to 200 (KALY…RKIT), 255 to 275 (KPFA…LSYS), and 291 to 312 (CFNN…ASQA). Glutamate 367 is a [CaMn4O5] cluster binding site. A helical membrane pass occupies residues 447–471 (RARAAAAGFEKGIDRDFEPVLSMTP).

Belongs to the PsbB/PsbC family. PsbC subfamily. PSII is composed of 1 copy each of membrane proteins PsbA, PsbB, PsbC, PsbD, PsbE, PsbF, PsbH, PsbI, PsbJ, PsbK, PsbL, PsbM, PsbT, PsbX, PsbY, PsbZ, Psb30/Ycf12, at least 3 peripheral proteins of the oxygen-evolving complex and a large number of cofactors. It forms dimeric complexes. Binds multiple chlorophylls and provides some of the ligands for the Ca-4Mn-5O cluster of the oxygen-evolving complex. It may also provide a ligand for a Cl- that is required for oxygen evolution. PSII binds additional chlorophylls, carotenoids and specific lipids. is required as a cofactor.

It localises to the plastid. Its subcellular location is the chloroplast thylakoid membrane. Functionally, one of the components of the core complex of photosystem II (PSII). It binds chlorophyll and helps catalyze the primary light-induced photochemical processes of PSII. PSII is a light-driven water:plastoquinone oxidoreductase, using light energy to abstract electrons from H(2)O, generating O(2) and a proton gradient subsequently used for ATP formation. The polypeptide is Photosystem II CP43 reaction center protein (Jasminum nudiflorum (Winter jasmine)).